The primary structure comprises 263 residues: MNDNFKKQPHHLIYEELLQQGITLGITTRGDGLSDYPKNAFNMARYIDDRPYNITQHQLQLAEEIAFDRKNWVFPIQTHENKVACITKDDIGTNIDTLTDALHGIDAMYTYDSNVLLTMCYADCVPVYFYSTKHHFIALAHAGWRGTYTEIVKEVLKHVNFDLKDLHVVIGPSTSSSYEINDDIKNKFETLPIDSANYIETRGRDRHGIDLKKANAALLNYYGVPKENIYTTAYATSEHLELFFSYRLEKGQTGRMLAFIGQQ.

Zn(2+) is bound by residues His-79, Cys-124, and His-141.

It belongs to the purine nucleoside phosphorylase YfiH/LACC1 family. Homodimer. The cofactor is Cu(2+). Requires Zn(2+) as cofactor.

It catalyses the reaction adenosine + phosphate = alpha-D-ribose 1-phosphate + adenine. The enzyme catalyses S-methyl-5'-thioadenosine + phosphate = 5-(methylsulfanyl)-alpha-D-ribose 1-phosphate + adenine. It carries out the reaction inosine + phosphate = alpha-D-ribose 1-phosphate + hypoxanthine. The catalysed reaction is adenosine + H2O + H(+) = inosine + NH4(+). Its function is as follows. Purine nucleoside enzyme that catalyzes the phosphorolysis of adenosine and inosine nucleosides, yielding D-ribose 1-phosphate and the respective free bases, adenine and hypoxanthine. Also catalyzes the phosphorolysis of S-methyl-5'-thioadenosine into adenine and S-methyl-5-thio-alpha-D-ribose 1-phosphate. Also has adenosine deaminase activity. The polypeptide is Purine nucleoside phosphorylase SAS1121 (Staphylococcus aureus (strain MSSA476)).